Here is a 666-residue protein sequence, read N- to C-terminus: Frizzled-3 (666 aa).

Residues 1 to 22 form the signal peptide; sequence MAVSWIVFDLWLLTVFLGQIGG. The region spanning 23 to 136 is the FZ domain; the sequence is HSLFSCEPIT…CSRFPDCDEP (114 aa). Topologically, residues 23–205 are extracellular; that stretch reads HSLFSCEPIT…REELSFARYF (183 aa). 5 disulfides stabilise this stretch: cysteine 28–cysteine 89, cysteine 36–cysteine 82, cysteine 73–cysteine 110, cysteine 99–cysteine 133, and cysteine 103–cysteine 127. An N-linked (GlcNAc...) asparagine glycan is attached at asparagine 42. A helical transmembrane segment spans residues 206–226; that stretch reads IGLISIICLSATLFTFLTFLI. Residues 227–237 lie on the Cytoplasmic side of the membrane; the sequence is DVTRFRYPERP. Residues 238 to 258 traverse the membrane as a helical segment; that stretch reads IIFYAVCYMMVSLIFFIGFLL. The Extracellular segment spans residues 259–288; the sequence is EDRVACNASSPAQYKASTVTQGSHNKACTM. Asparagine 265 carries N-linked (GlcNAc...) asparagine glycosylation. Residues 289 to 309 form a helical membrane-spanning segment; the sequence is LFMVLYFFTMAGSVWWVILTI. Topologically, residues 310-328 are cytoplasmic; the sequence is TWFLAAVPKWGSEAIEKKA. The helical transmembrane segment at 329-349 threads the bilayer; it reads LLFHASAWGIPGTLTIILLAM. Over 350-374 the chain is Extracellular; that stretch reads NKIEGDNISGVCFVGLYDVDALRYF. Residue asparagine 356 is glycosylated (N-linked (GlcNAc...) asparagine). A helical membrane pass occupies residues 375-395; the sequence is VLAPLCLYVVVGVSLLLAGII. Residues 396–420 lie on the Cytoplasmic side of the membrane; the sequence is SLNRVRIEIPLEKENQDKLVKFMIR. A helical membrane pass occupies residues 421-441; sequence IGVFSILYLVPLLVVIGCYFY. Over 442–477 the chain is Extracellular; the sequence is EQAYRGIWETTWIQERCREYHIPCPYQVTQMSRPDL. A helical transmembrane segment spans residues 478 to 498; it reads ILFLMKYLMALIVGIPSIFWV. Residues 499 to 666 lie on the Cytoplasmic side of the membrane; that stretch reads GSKKTCFEWA…RVIEEDGTSA (168 aa). A Lys-Thr-X-X-X-Trp motif, mediates interaction with the PDZ domain of Dvl family members motif is present at residues 502–507; that stretch reads KTCFEW. The tract at residues 538–666 is disordered; sequence RDPNTPIIRK…RVIEEDGTSA (129 aa). Residues 550–565 show a composition bias toward polar residues; it reads GTSTQGTSTHASSTQL. Over residues 617–638 the composition is skewed to basic and acidic residues; it reads LTDHSRHSSSHRLNEQSRHSSI. Over residues 639-656 the composition is skewed to polar residues; it reads RDLSNNPMTHITHGTSMN.

It belongs to the G-protein coupled receptor Fz/Smo family. As to quaternary structure, interacts with VANGL2. Post-translationally, ubiquitinated by ZNRF3, leading to its degradation by the proteasome. In terms of tissue distribution, expressed in the cortex, diencephalon, rostral brainstem and little or no staining is seen in the striatum or cerebellum. Expressed in both hair cells and supporting cells in the utricle, saccule, cristae and the organ of Corti in the inner ear (at protein level). Highly expressed in the CNS. In skin, it is restricted to the epidermis and to the developing hair follicle.

It localises to the membrane. It is found in the cell membrane. The protein localises to the cell surface. Its subcellular location is the apical cell membrane. Its function is as follows. Receptor for Wnt proteins. Most of frizzled receptors are coupled to the beta-catenin canonical signaling pathway, which leads to the activation of disheveled proteins, inhibition of GSK-3 kinase, nuclear accumulation of beta-catenin and activation of Wnt target genes. A second signaling pathway involving PKC and calcium fluxes has been seen for some family members, but it is not yet clear if it represents a distinct pathway or if it can be integrated in the canonical pathway, as PKC seems to be required for Wnt-mediated inactivation of GSK-3 kinase. Both pathways seem to involve interactions with G-proteins. Activation by Wnt5A stimulates PKC activity via a G-protein-dependent mechanism. Involved in transduction and intercellular transmission of polarity information during tissue morphogenesis and/or in differentiated tissues. Plays a role in controlling early axon growth and guidance processes necessary for the formation of a subset of central and peripheral major fiber tracts. Required for the development of major fiber tracts in the central nervous system, including: the anterior commissure, the corpus callosum, the thalamocortical, corticothalamic and nigrostriatal tracts, the corticospinal tract, the fasciculus retroflexus, the mammillothalamic tract, the medial lemniscus, and ascending fiber tracts from the spinal cord to the brain. In the peripheral nervous system, controls axon growth in distinct populations of cranial and spinal motor neurons, including the facial branchimotor nerve, the hypoglossal nerve, the phrenic nerve, and motor nerves innervating dorsal limbs. Involved in the migration of cranial neural crest cells. May also be implicated in the transmission of sensory information from the trunk and limbs to the brain. Controls commissural sensory axons guidance after midline crossing along the anterior-posterior axis in the developing spinal cord in a Wnt-dependent signaling pathway. Together with FZD6, is involved in the neural tube closure and plays a role in the regulation of the establishment of planar cell polarity (PCP), particularly in the orientation of asymmetric bundles of stereocilia on the apical faces of a subset of auditory and vestibular sensory cells located in the inner ear. Promotes neurogenesis by maintaining sympathetic neuroblasts within the cell cycle in a beta-catenin-dependent manner. In Mus musculus (Mouse), this protein is Frizzled-3 (Fzd3).